A 1200-amino-acid chain; its full sequence is Chromosome partition protein Smc (1200 aa).

32–39 (PNGCGKSN) serves as a coordination point for ATP. Coiled coils occupy residues 171–219 (VTKY…AEKY) and 252–342 (LENL…MSEA). Positions 528–644 (QGIFGLVADV…QDVATARAWT (117 aa)) constitute an SMC hinge domain. Coiled-coil stretches lie at residues 679 to 706 (ALQK…ILTR) and 735 to 762 (LASQ…LEVE). The interval 763–795 (EGQLTQSHQALEHEEEASRGEVAHGQADREGRE) is disordered. Residues 772–795 (ALEHEEEASRGEVAHGQADREGRE) show a composition bias toward basic and acidic residues. Positions 1002–1039 (HAELSKRYDFLTAQKKDLQSSIEQLKEAIQRIDATSRE) form a coiled coil.

This sequence belongs to the SMC family. Homodimer. Probably forms the Structural Maintenance of Chromosome (SMC) condensin-like complex with ScpA and ScpB.

The protein localises to the cytoplasm. A conditionally essential component of the chromosome segregation machinery. Required for chromosome condensation and partitioning. Important for positioning of ParB-parS complexes (ori of replication) and of the ter replication site, as well as for segration of the ParB-parS complex and thus chromosome segregation. May act via the formation of a condensin-like complex containing Smc, ScpA and ScpB that pulls DNA away from mid-cell into both cell halves. The chain is Chromosome partition protein Smc from Myxococcus xanthus (strain DK1622).